The primary structure comprises 542 residues: Hydroxylamine reductase (542 aa).

Positions 3, 6, 15, and 21 each coordinate [4Fe-4S] cluster. Hybrid [4Fe-2O-2S] cluster contacts are provided by His243, Glu267, Cys311, Cys398, Cys426, Cys451, Glu485, and Lys487. Cys398 carries the post-translational modification Cysteine persulfide.

This sequence belongs to the HCP family. [4Fe-4S] cluster serves as cofactor. Requires hybrid [4Fe-2O-2S] cluster as cofactor.

Its subcellular location is the cytoplasm. The enzyme catalyses A + NH4(+) + H2O = hydroxylamine + AH2 + H(+). In terms of biological role, catalyzes the reduction of hydroxylamine to form NH(3) and H(2)O. The polypeptide is Hydroxylamine reductase (Syntrophobacter fumaroxidans (strain DSM 10017 / MPOB)).